The primary structure comprises 206 residues: Urease accessory protein UreG (206 aa).

GTP is bound at residue 15-22; that stretch reads GPVGSGKT.

It belongs to the SIMIBI class G3E GTPase family. UreG subfamily. Homodimer. UreD, UreF and UreG form a complex that acts as a GTP-hydrolysis-dependent molecular chaperone, activating the urease apoprotein by helping to assemble the nickel containing metallocenter of UreC. The UreE protein probably delivers the nickel.

The protein resides in the cytoplasm. Facilitates the functional incorporation of the urease nickel metallocenter. This process requires GTP hydrolysis, probably effectuated by UreG. This chain is Urease accessory protein UreG, found in Ralstonia pickettii (strain 12J).